The sequence spans 116 residues: Large ribosomal subunit protein bL19 (116 aa).

It belongs to the bacterial ribosomal protein bL19 family.

In terms of biological role, this protein is located at the 30S-50S ribosomal subunit interface and may play a role in the structure and function of the aminoacyl-tRNA binding site. The sequence is that of Large ribosomal subunit protein bL19 from Flavobacterium johnsoniae (strain ATCC 17061 / DSM 2064 / JCM 8514 / BCRC 14874 / CCUG 350202 / NBRC 14942 / NCIMB 11054 / UW101) (Cytophaga johnsonae).